A 287-amino-acid chain; its full sequence is Probable endonuclease 4 (287 aa).

Zn(2+)-binding residues include histidine 69, histidine 109, glutamate 144, aspartate 178, histidine 181, histidine 215, aspartate 228, histidine 230, and glutamate 260.

It belongs to the AP endonuclease 2 family. The cofactor is Zn(2+).

It catalyses the reaction Endonucleolytic cleavage to 5'-phosphooligonucleotide end-products.. Its function is as follows. Endonuclease IV plays a role in DNA repair. It cleaves phosphodiester bonds at apurinic or apyrimidinic (AP) sites, generating a 3'-hydroxyl group and a 5'-terminal sugar phosphate. This Thermotoga sp. (strain RQ2) protein is Probable endonuclease 4.